A 316-amino-acid chain; its full sequence is 1-aminocyclopropane-1-carboxylate oxidase 2 (316 aa).

In terms of domain architecture, Fe2OG dioxygenase spans 153–253 (PNFGTKVSNY…RMSLASFYNP (101 aa)). Fe cation is bound by residues His-177, Asp-179, and His-234.

The protein belongs to the iron/ascorbate-dependent oxidoreductase family. Fe cation serves as cofactor. As to expression, leaves.

It carries out the reaction 1-aminocyclopropane-1-carboxylate + L-ascorbate + O2 = ethene + L-dehydroascorbate + hydrogen cyanide + CO2 + 2 H2O. Its pathway is alkene biosynthesis; ethylene biosynthesis via S-adenosyl-L-methionine; ethylene from S-adenosyl-L-methionine: step 2/2. This Solanum lycopersicum (Tomato) protein is 1-aminocyclopropane-1-carboxylate oxidase 2 (ACO2).